Reading from the N-terminus, the 261-residue chain is Small ribosomal subunit protein uS2 (261 aa).

Belongs to the universal ribosomal protein uS2 family.

This is Small ribosomal subunit protein uS2 from Rhodospirillum centenum (strain ATCC 51521 / SW).